A 546-amino-acid polypeptide reads, in one-letter code: Chaperonin GroEL 1 (546 aa).

Residues 30 to 33 (TLGP), lysine 51, 87 to 91 (DGTTT), glycine 415, 479 to 481 (NAA), and aspartate 495 contribute to the ATP site. Positions 526–546 (KEDAPMPGGMPGGMGGMGMDM) are disordered. The span at 534 to 546 (GMPGGMGGMGMDM) shows a compositional bias: gly residues.

The protein belongs to the chaperonin (HSP60) family. Forms a cylinder of 14 subunits composed of two heptameric rings stacked back-to-back. Interacts with the co-chaperonin GroES.

It is found in the cytoplasm. It catalyses the reaction ATP + H2O + a folded polypeptide = ADP + phosphate + an unfolded polypeptide.. In terms of biological role, together with its co-chaperonin GroES, plays an essential role in assisting protein folding. The GroEL-GroES system forms a nano-cage that allows encapsulation of the non-native substrate proteins and provides a physical environment optimized to promote and accelerate protein folding. This chain is Chaperonin GroEL 1, found in Burkholderia ambifaria (strain ATCC BAA-244 / DSM 16087 / CCUG 44356 / LMG 19182 / AMMD) (Burkholderia cepacia (strain AMMD)).